Reading from the N-terminus, the 701-residue chain is MSAKSTPDAGPQEQATEAEAELRHRWQALADEVRDHQFRYYVRDAPVISDADFDKLFQQLEALEAEHPELRAPDSPTQLVGGAGFATDFTPAEHLERMLSLDDVFNVDELTAWSSRVRAEVGDDAAYLCELKVDGLALALVYRDGRLERAATRGDGRVGEDVTLNARTLDDVPERLTPSDEFPHPAVLEVRGEVFFRVADFEALNAGLVAEGKPPFANPRNSAAGSLRQKNPAVTARRPLRMVCHGIGYTEGFSPTSLHEAYGALRAWGLPVSDHTTRVQGMDAVRERIAYWGEHRHDIEHEIDGVVVKLDQIALQRRLGATSRAPRWAVAYKYPPEEAQTKLLDIRVNVGRTGRVTPFAYMEPVKVAGSTVGLATLHNASEVKRKGVLIGDTVVIRKAGDVIPEVLGPVVDLRDGTEREFVMPTHCPECGTELAPAKEGDADIRCPNSRTCPAQLRERVFHVAGRGAFDIEGLGYEAAIALLQAGVITDEGDLFTLTEDDLLRTELFTTKGGAVSANGRRLLANLGKAKAQPLWRVLVALSIRHVGPTAARALATEFGSLDAIIEASEDQLAAVEGVGPTIAAAVKEWFTVDWHCAIVEKWRAAGVRMADERDASIARTLEGLSIVVTGSLAGFSRDEAKEAIIARGGKAAGSVSKKTAYVVAGDSPGSKYDKAIDLGVPVLDEDGFRNLLENGPQAPEG.

The interval Met1–Glu21 is disordered. NAD(+) is bound by residues Asp50–Asp54, Ser100–Leu101, and Glu130. Lys132 functions as the N6-AMP-lysine intermediate in the catalytic mechanism. The NAD(+) site is built by Arg153, Glu193, Lys309, and Lys333. Positions 427, 430, 446, and 452 each coordinate Zn(2+). One can recognise a BRCT domain in the interval Ser616 to Gly701.

Belongs to the NAD-dependent DNA ligase family. LigA subfamily. Mg(2+) is required as a cofactor. Requires Mn(2+) as cofactor.

The enzyme catalyses NAD(+) + (deoxyribonucleotide)n-3'-hydroxyl + 5'-phospho-(deoxyribonucleotide)m = (deoxyribonucleotide)n+m + AMP + beta-nicotinamide D-nucleotide.. DNA ligase that catalyzes the formation of phosphodiester linkages between 5'-phosphoryl and 3'-hydroxyl groups in double-stranded DNA using NAD as a coenzyme and as the energy source for the reaction. It is essential for DNA replication and repair of damaged DNA. The protein is DNA ligase of Mycobacterium sp. (strain KMS).